Reading from the N-terminus, the 33-residue chain is Thrombin-like enzyme RP34 (33 aa).

The region spanning 1-33 is the Peptidase S1 domain; the sequence is VIGGDEXDINEHRSLALMYXSWSHRFIXXGXLI.

This sequence belongs to the peptidase S1 family. Snake venom subfamily. As to quaternary structure, homodimer. As to expression, expressed by the venom gland.

Its subcellular location is the secreted. It carries out the reaction Selective cleavage of Arg-|-Xaa bond in fibrinogen, to form fibrin, and release fibrinopeptide A. The specificity of further degradation of fibrinogen varies with species origin of the enzyme.. In terms of biological role, thrombin-like snake venom serine protease that displays clotting activity on fibrinogen. Shows both arginine-ester hydrolase and amidase activities on synthetic substrates. Also shows proteolytic activity toward casein. The protein is Thrombin-like enzyme RP34 of Cerastes cerastes (Horned desert viper).